The primary structure comprises 239 residues: Large ribosomal subunit protein uL1 (239 aa).

It belongs to the universal ribosomal protein uL1 family. In terms of assembly, part of the 50S ribosomal subunit.

Its function is as follows. Binds directly to 23S rRNA. The L1 stalk is quite mobile in the ribosome, and is involved in E site tRNA release. Protein L1 is also a translational repressor protein, it controls the translation of the L11 operon by binding to its mRNA. This chain is Large ribosomal subunit protein uL1, found in Rickettsia africae (strain ESF-5).